A 197-amino-acid chain; its full sequence is Phosphoheptose isomerase (197 aa).

The 162-residue stretch at methionine 36–glutamate 197 folds into the SIS domain. A substrate-binding site is contributed by asparagine 51–glycine 53. Residues histidine 60 and glutamate 64 each contribute to the Zn(2+) site. Substrate is bound by residues glutamate 64, asparagine 93–aspartate 94, serine 119–serine 121, serine 124, and glutamine 174. Residues glutamine 174 and histidine 182 each contribute to the Zn(2+) site.

Belongs to the SIS family. GmhA subfamily. Homotetramer. It depends on Zn(2+) as a cofactor.

Its subcellular location is the cytoplasm. It catalyses the reaction 2 D-sedoheptulose 7-phosphate = D-glycero-alpha-D-manno-heptose 7-phosphate + D-glycero-beta-D-manno-heptose 7-phosphate. Its pathway is carbohydrate biosynthesis; D-glycero-D-manno-heptose 7-phosphate biosynthesis; D-glycero-alpha-D-manno-heptose 7-phosphate and D-glycero-beta-D-manno-heptose 7-phosphate from sedoheptulose 7-phosphate: step 1/1. Catalyzes the isomerization of sedoheptulose 7-phosphate in D-glycero-D-manno-heptose 7-phosphate. In Pseudomonas fluorescens (strain Pf0-1), this protein is Phosphoheptose isomerase.